The primary structure comprises 330 residues: LIM domain-containing protein pin-2 (330 aa).

5 LIM zinc-binding domains span residues 21-73, 82-132, 144-194, 202-255, and 264-315; these read CERC…CEHD, CAKC…CFLC, CNKC…CPRC, CFDC…CRDD, and CFIC…CKKC.

Expressed in neurons and intestine.

The protein resides in the cytoplasm. The protein localises to the nucleus. This chain is LIM domain-containing protein pin-2 (pin-2), found in Caenorhabditis elegans.